We begin with the raw amino-acid sequence, 172 residues long: MSLKDKIRVIEDFPKKGISFKDITTLIADGEGLRDSVDQMAEFFKDKNIDVVVGPEARGFIFGVPVAYALGVGFIPVRKPGKLPGDTVRVEYDLEYGKDALEIHKDAIKPGMRVAIVDDLLATGGTIAAVAKLVEQAGGEVAGLAFTIELTELKGRDKLKGYEVTSLVDYDV.

The protein belongs to the purine/pyrimidine phosphoribosyltransferase family. In terms of assembly, homodimer.

It localises to the cytoplasm. The catalysed reaction is AMP + diphosphate = 5-phospho-alpha-D-ribose 1-diphosphate + adenine. It participates in purine metabolism; AMP biosynthesis via salvage pathway; AMP from adenine: step 1/1. In terms of biological role, catalyzes a salvage reaction resulting in the formation of AMP, that is energically less costly than de novo synthesis. This is Adenine phosphoribosyltransferase from Clostridium perfringens (strain ATCC 13124 / DSM 756 / JCM 1290 / NCIMB 6125 / NCTC 8237 / Type A).